A 72-amino-acid polypeptide reads, in one-letter code: Large ribosomal subunit protein bL31 (72 aa).

Residues Cys16, Cys18, Cys37, and Cys40 each contribute to the Zn(2+) site.

This sequence belongs to the bacterial ribosomal protein bL31 family. Type A subfamily. Part of the 50S ribosomal subunit. Zn(2+) serves as cofactor.

In terms of biological role, binds the 23S rRNA. The sequence is that of Large ribosomal subunit protein bL31 from Pseudomonas fluorescens (strain Pf0-1).